Here is a 692-residue protein sequence, read N- to C-terminus: Putative clathrin assembly protein At1g14910 (692 aa).

The region spanning 24–161 (RVNSDYAELD…ECFRVLKYDI (138 aa)) is the ENTH domain. Positions 325–383 (YTPDDGLTSEDVGPSHEEHETSSPSDSAVVPSEETQLSSQSPPSVETPQNFIDTDDLLG) are disordered. Positions 357–376 (EETQLSSQSPPSVETPQNFI) are enriched in polar residues. Residue Ser-363 is modified to Phosphoserine. Copy 1 of the repeat occupies 532 to 548 (FGEFPIVPVSEPQSTTS). An 8 X 17 AA approximate tandem repeats region spans residues 532–666 (FGEFPIVPVS…PVSEPQNTTG (135 aa)). One copy of the 2; truncated repeat lies at 549–564 (FGAFPVPVSEPSNTTG). Repeat copies occupy residues 565 to 581 (FGEI…NTTA), 582 to 598 (FGEF…NITG), 599 to 615 (FGAL…NTTG), 616 to 632 (FGEF…NTTG), 633 to 649 (FGAL…KTTG), and 650 to 666 (LGEF…NTTG).

As to expression, expressed in the whole plant.

Its subcellular location is the membrane. It is found in the clathrin-coated pit. The protein localises to the golgi apparatus. It localises to the cytoplasmic vesicle. The protein resides in the clathrin-coated vesicle. This Arabidopsis thaliana (Mouse-ear cress) protein is Putative clathrin assembly protein At1g14910.